Consider the following 478-residue polypeptide: GDP-fucose protein O-fucosyltransferase 3 (478 aa).

The Cytoplasmic portion of the chain corresponds to 1-9 (MVRIQRGKL). Residues 10 to 30 (LAFCLCVMATVFLLITLQVVV) traverse the membrane as a helical; Signal-anchor for type II membrane protein segment. Over 31–478 (ELGKFEGKKF…QEFWALVFKD (448 aa)) the chain is Lumenal. Asn110 and Asn168 each carry an N-linked (GlcNAc...) asparagine glycan. A disulfide bond links Cys389 and Cys392.

Belongs to the glycosyltransferase 10 family.

It localises to the endoplasmic reticulum membrane. The enzyme catalyses L-threonyl-[protein] + GDP-beta-L-fucose = 3-O-(alpha-L-fucosyl)-L-threonyl-[protein] + GDP + H(+). It carries out the reaction L-seryl-[protein] + GDP-beta-L-fucose = 3-O-(alpha-L-fucosyl)-L-seryl-[protein] + GDP + H(+). Its pathway is protein modification; protein glycosylation. Its function is as follows. Protein O-fucosyltransferase that specifically catalyzes O-fucosylation of serine or threonine residues in EMI domains of target proteins, such as MMRN1, MMRN2 and EMID1. Attaches fucose through an O-glycosidic linkage. O-fucosylation of EMI domain-containing proteins may be required for facilitating protein folding and secretion. May also show alpha-(1,3)-fucosyltransferase activity toward the innermost N-acetyl glucosamine (GlcNAc) residue in biantennary N-glycan acceptors. However, this was tested with a library of synthetic substrates and this activity is unsure in vivo. May be involved in biosynthesis of Lewis X-carrying biantennary N-glycans that regulate neuron stem cell self-renewal during brain development. This is GDP-fucose protein O-fucosyltransferase 3 (FUT10) from Bos taurus (Bovine).